Here is a 305-residue protein sequence, read N- to C-terminus: MPGHNTSRNSSCDPIVTPHLISLYFIVLIGGLVGVISILFLLVKMNTRSVTTMAVINLVVVHSVFLLTVPFRLTYLIKKTWMFGLPFCKFVSAMLHIHMYLTFLFYVVILVTRYLIFFKCKDKVEFYRKLHAVAASAGMWTLVIVIVVPLVVSRYGIHEEYNEEHCFKFHKELAYTYVKIINYMIVIFVIAVAVILLVFQVFIIMLMVQKLRHSLLSHQEFWAQLKNLFFIGVILVCFLPYQFFRIYYLNVVTHSNACNSKVAFYNEIFLSVTAISCYDLLLFVFGGSHWFKQKIIGLWNCVLCR.

The Extracellular segment spans residues 1-22 (MPGHNTSRNSSCDPIVTPHLIS). Residues Asn5 and Asn9 are each glycosylated (N-linked (GlcNAc...) asparagine). The chain crosses the membrane as a helical span at residues 23–43 (LYFIVLIGGLVGVISILFLLV). At 44–50 (KMNTRSV) the chain is on the cytoplasmic side. The helical transmembrane segment at 51–71 (TTMAVINLVVVHSVFLLTVPF) threads the bilayer. At 72-89 (RLTYLIKKTWMFGLPFCK) the chain is on the extracellular side. Residues 90–110 (FVSAMLHIHMYLTFLFYVVIL) form a helical membrane-spanning segment. Residues 111–131 (VTRYLIFFKCKDKVEFYRKLH) lie on the Cytoplasmic side of the membrane. A helical transmembrane segment spans residues 132–152 (AVAASAGMWTLVIVIVVPLVV). Residues 153 to 183 (SRYGIHEEYNEEHCFKFHKELAYTYVKIINY) lie on the Extracellular side of the membrane. Residues 184 to 204 (MIVIFVIAVAVILLVFQVFII) traverse the membrane as a helical segment. The Cytoplasmic segment spans residues 205-227 (MLMVQKLRHSLLSHQEFWAQLKN). The chain crosses the membrane as a helical span at residues 228 to 248 (LFFIGVILVCFLPYQFFRIYY). Residues 249–267 (LNVVTHSNACNSKVAFYNE) are Extracellular-facing. A helical membrane pass occupies residues 268–288 (IFLSVTAISCYDLLLFVFGGS). Over 289-305 (HWFKQKIIGLWNCVLCR) the chain is Cytoplasmic.

It belongs to the G-protein coupled receptor 1 family.

The protein localises to the cell membrane. Functionally, orphan receptor. In Homo sapiens (Human), this protein is Probable G-protein coupled receptor 141 (GPR141).